Here is a 235-residue protein sequence, read N- to C-terminus: uncharacterized protein (235 aa).

The protein belongs to the UreF family.

Its subcellular location is the cytoplasm. The protein localises to the nucleus. Its function is as follows. Probably facilitates nickel incorporation. This is an uncharacterized protein from Schizosaccharomyces pombe (strain 972 / ATCC 24843) (Fission yeast).